We begin with the raw amino-acid sequence, 162 residues long: NADH-quinone oxidoreductase subunit I (162 aa).

4Fe-4S ferredoxin-type domains are found at residues 53–83 and 93–122; these read LRRYPNGEERCIACKLCEAVCPALAITIEAE and TRYDIDMTKCIYCGLCQEACPVDAIVEGPN. The [4Fe-4S] cluster site is built by C63, C66, C69, C73, C102, C105, C108, and C112.

Belongs to the complex I 23 kDa subunit family. As to quaternary structure, NDH-1 is composed of 14 different subunits. Subunits NuoA, H, J, K, L, M, N constitute the membrane sector of the complex. It depends on [4Fe-4S] cluster as a cofactor.

It is found in the cell inner membrane. The enzyme catalyses a quinone + NADH + 5 H(+)(in) = a quinol + NAD(+) + 4 H(+)(out). Functionally, NDH-1 shuttles electrons from NADH, via FMN and iron-sulfur (Fe-S) centers, to quinones in the respiratory chain. The immediate electron acceptor for the enzyme in this species is believed to be ubiquinone. Couples the redox reaction to proton translocation (for every two electrons transferred, four hydrogen ions are translocated across the cytoplasmic membrane), and thus conserves the redox energy in a proton gradient. This Rhodospirillum centenum (strain ATCC 51521 / SW) protein is NADH-quinone oxidoreductase subunit I.